The chain runs to 143 residues: Transcriptional regulator MraZ (143 aa).

2 consecutive SpoVT-AbrB domains span residues 5-47 (EYEH…PRSV) and 76-119 (AADM…APRR).

This sequence belongs to the MraZ family. In terms of assembly, forms oligomers.

The protein resides in the cytoplasm. The protein localises to the nucleoid. The polypeptide is Transcriptional regulator MraZ (Roseiflexus sp. (strain RS-1)).